The primary structure comprises 102 residues: UPF0473 protein SAS1551 (102 aa).

This sequence belongs to the UPF0473 family.

The protein is UPF0473 protein SAS1551 of Staphylococcus aureus (strain MSSA476).